The following is a 340-amino-acid chain: Phosphoribosylformylglycinamidine cyclo-ligase (340 aa).

It belongs to the AIR synthase family.

The protein resides in the cytoplasm. It carries out the reaction 2-formamido-N(1)-(5-O-phospho-beta-D-ribosyl)acetamidine + ATP = 5-amino-1-(5-phospho-beta-D-ribosyl)imidazole + ADP + phosphate + H(+). Its pathway is purine metabolism; IMP biosynthesis via de novo pathway; 5-amino-1-(5-phospho-D-ribosyl)imidazole from N(2)-formyl-N(1)-(5-phospho-D-ribosyl)glycinamide: step 2/2. In Streptococcus pyogenes serotype M2 (strain MGAS10270), this protein is Phosphoribosylformylglycinamidine cyclo-ligase.